A 204-amino-acid chain; its full sequence is ATP phosphoribosyltransferase (204 aa).

The protein belongs to the ATP phosphoribosyltransferase family. Short subfamily. As to quaternary structure, heteromultimer composed of HisG and HisZ subunits.

It localises to the cytoplasm. The catalysed reaction is 1-(5-phospho-beta-D-ribosyl)-ATP + diphosphate = 5-phospho-alpha-D-ribose 1-diphosphate + ATP. Its pathway is amino-acid biosynthesis; L-histidine biosynthesis; L-histidine from 5-phospho-alpha-D-ribose 1-diphosphate: step 1/9. In terms of biological role, catalyzes the condensation of ATP and 5-phosphoribose 1-diphosphate to form N'-(5'-phosphoribosyl)-ATP (PR-ATP). Has a crucial role in the pathway because the rate of histidine biosynthesis seems to be controlled primarily by regulation of HisG enzymatic activity. The protein is ATP phosphoribosyltransferase of Staphylococcus aureus (strain USA300).